Here is a 209-residue protein sequence, read N- to C-terminus: RNA chaperone ProQ (209 aa).

The segment at 101–155 is disordered; that stretch reads LAESKAKVQARRKEQAQKAREEGKAKAKPAANKKPQQPRRTNKPKVQKPTKPVET. Positions 111–125 are enriched in basic and acidic residues; it reads RRKEQAQKAREEGKA. The span at 136–148 shows a compositional bias: basic residues; that stretch reads QQPRRTNKPKVQK.

The protein belongs to the ProQ family.

The protein localises to the cytoplasm. RNA chaperone with significant RNA binding, RNA strand exchange and RNA duplexing activities. The protein is RNA chaperone ProQ of Vibrio parahaemolyticus serotype O3:K6 (strain RIMD 2210633).